The sequence spans 167 residues: Ribosome maturation factor RimM (167 aa).

One can recognise a PRC barrel domain in the interval 94–165 (ENEFYYSDII…KIIITPMEGL (72 aa)).

Belongs to the RimM family. As to quaternary structure, binds ribosomal protein uS19.

The protein resides in the cytoplasm. An accessory protein needed during the final step in the assembly of 30S ribosomal subunit, possibly for assembly of the head region. Essential for efficient processing of 16S rRNA. May be needed both before and after RbfA during the maturation of 16S rRNA. It has affinity for free ribosomal 30S subunits but not for 70S ribosomes. The chain is Ribosome maturation factor RimM from Staphylococcus aureus (strain MRSA252).